The chain runs to 376 residues: Rhodopsin (376 aa).

Topologically, residues 1-51 (MSLINEPSYSAYSWGGQGGYGNQTVVDKVLPEMLHLIDPHWYQFPPMNPLW) are extracellular. Asparagine 22 carries N-linked (GlcNAc...) asparagine glycosylation. A helical membrane pass occupies residues 52–76 (HGLLGFVIGCLGFVSVVGNGMVIYI). Residues 77-88 (FSTTKGLRTPSN) lie on the Cytoplasmic side of the membrane. The chain crosses the membrane as a helical span at residues 89–113 (LLVVNLAFSDFLMMLSMSPPMVINC). Residues 114–128 (YYETWVLGPFMCELY) lie on the Extracellular side of the membrane. A disulfide bond links cysteine 125 and cysteine 202. The helical transmembrane segment at 129-148 (ALLGSLFGCGSIWTMVMIAL) threads the bilayer. Residues 149 to 167 (DRYNVIVKGLAAKPMTNKT) are Cytoplasmic-facing. Residues 168–191 (AMLRILGIWAMSIAWTVFPLFGWN) form a helical membrane-spanning segment. Over 192–215 (RYVPEGNMTACGTDYLNKEWVSRS) the chain is Extracellular. A glycan (N-linked (GlcNAc...) asparagine) is linked at asparagine 198. The chain crosses the membrane as a helical span at residues 216–243 (YILVYSVFVYFLPLATIIYSYWFIVQAV). The Cytoplasmic portion of the chain corresponds to 244-278 (SAHEKQMREQAKKMNVASLRSAENANTSAECKLAK). The helical transmembrane segment at 279–302 (VALMTISLWFFAWTPYLVTDFSGI) threads the bilayer. Over 303-309 (FEWGKIS) the chain is Extracellular. A helical transmembrane segment spans residues 310-334 (PLATIWCSLFAKANAVYNPIVYGIS). Lysine 321 is subject to N6-(retinylidene)lysine. The Cytoplasmic portion of the chain corresponds to 335–376 (HPKYRAALNKKFPSLACASEPDDTASQASGATTVSDEKSASA). The tract at residues 353–376 (SEPDDTASQASGATTVSDEKSASA) is disordered. Residues 358–368 (TASQASGATTV) are compositionally biased toward polar residues.

The protein belongs to the G-protein coupled receptor 1 family. Opsin subfamily. Phosphorylated on some or all of the serine and threonine residues present in the C-terminal region.

Its subcellular location is the membrane. Its function is as follows. Visual pigments are the light-absorbing molecules that mediate vision. They consist of an apoprotein, opsin, covalently linked to cis-retinal. The sequence is that of Rhodopsin from Sphodromantis sp. (Mantis).